Here is a 186-residue protein sequence, read N- to C-terminus: Ribosome-recycling factor (186 aa).

It belongs to the RRF family.

The protein localises to the cytoplasm. Its function is as follows. Responsible for the release of ribosomes from messenger RNA at the termination of protein biosynthesis. May increase the efficiency of translation by recycling ribosomes from one round of translation to another. The chain is Ribosome-recycling factor from Methylocella silvestris (strain DSM 15510 / CIP 108128 / LMG 27833 / NCIMB 13906 / BL2).